We begin with the raw amino-acid sequence, 104 residues long: ATP-dependent Clp protease adapter protein ClpS (104 aa).

It belongs to the ClpS family. In terms of assembly, binds to the N-terminal domain of the chaperone ClpA.

Involved in the modulation of the specificity of the ClpAP-mediated ATP-dependent protein degradation. The chain is ATP-dependent Clp protease adapter protein ClpS from Nitratidesulfovibrio vulgaris (strain ATCC 29579 / DSM 644 / CCUG 34227 / NCIMB 8303 / VKM B-1760 / Hildenborough) (Desulfovibrio vulgaris).